Here is an 87-residue protein sequence, read N- to C-terminus: Exendin-3 (87 aa).

The first 21 residues, 1 to 21 (MKIILWLCVFGLFLATLFPVS), serve as a signal peptide directing secretion. Residues 22–45 (WQMPVESGLSSEDSASSESFASKI) constitute a propeptide that is removed on maturation. Residue serine 86 is modified to Serine amide.

This sequence belongs to the glucagon family. Expressed by the venom gland.

Its subcellular location is the secreted. In terms of biological role, stimulates vasoactive intestinal peptide (VIP) receptors in high concentrations (&gt;100 nM), resulting in both an increase in cAMP and amylase secretion from pancreatic acini, although at low concentrations (between 0.3 and 3 nM) it increases cAMP without stimulating amylase release. Stimulates the GLP-1 receptor (GLP1R). Induces hypotension that is mediated by relaxation of cardiac smooth muscle. This chain is Exendin-3, found in Heloderma horridum horridum (Mexican beaded lizard).